Consider the following 181-residue polypeptide: MARLQKHYRDTVINQLRERLGCQSVMAVPRIEKITLNIGAGEAVGDKKILERVMGDMARISGQKPVLTRARKSVAGFKIREDWPIGCKVTLRRKQMYEFLDRLINIAIPRIRDFRGLSPKSFDGRGNYNMGIREQIIFPEIDYDQIDAIRGMNITITTTAKTDEEGQALLRAFNFPFRTHT.

It belongs to the universal ribosomal protein uL5 family. In terms of assembly, part of the 50S ribosomal subunit; part of the 5S rRNA/L5/L18/L25 subcomplex. Contacts the 5S rRNA and the P site tRNA. Forms a bridge to the 30S subunit in the 70S ribosome.

This is one of the proteins that bind and probably mediate the attachment of the 5S RNA into the large ribosomal subunit, where it forms part of the central protuberance. In the 70S ribosome it contacts protein S13 of the 30S subunit (bridge B1b), connecting the 2 subunits; this bridge is implicated in subunit movement. Contacts the P site tRNA; the 5S rRNA and some of its associated proteins might help stabilize positioning of ribosome-bound tRNAs. This chain is Large ribosomal subunit protein uL5, found in Nitrosococcus oceani (strain ATCC 19707 / BCRC 17464 / JCM 30415 / NCIMB 11848 / C-107).